A 113-amino-acid chain; its full sequence is B-type lectin plumieribetin (113 aa).

The Bulb-type lectin domain maps to 1–109 (NYLSKNDELR…STEIWNSDKN (109 aa)).

As to quaternary structure, homotetramer. Interacts with alpha-1-beta-1 integrin (ITGA1/ITGB1). In terms of processing, not glycosylated. Not N-glycosylated and not O-glycosylated with the mostcommon O-linked glycoconjugates. Post-translationally, the N-terminus is blocked. In terms of tissue distribution, expressed by sting venom glands and is also found in skin mucus. Not found in other tissues tested.

Its subcellular location is the secreted. May contribute to some of the local and systemic effects of envenomation by the scorpionfish. Preferentially recognizes mannose-containing carbohydrate structures, but its interaction with single mannose residues is weak. Potently inhibits alpha-1-beta-1 integrin (ITGA1/ITGB1) binding to basement membrane collagen IV in a divalent cation-independent manner. In addition, moderately inhibits both laminin binding integrins alpha-3-beta-1 (ITGA3/ITGB1) and alpha-7-beta-1 (ITGA7/ITGB1). Weakens the cell-collagen contacts, reduces cell spreading, and alters the actin cytoskeleton, after the compensating alpha-2-beta-1 integrin is blocked. On the cellular level, fails to completely detach hepatocarcinoma HepG2 cells and primary arterial smooth muscle cells from the collagen IV fragment CB3. The protein is B-type lectin plumieribetin of Scorpaena plumieri (Spotted scorpionfish).